The following is an 819-amino-acid chain: Leucine--tRNA ligase (819 aa).

Positions 40–51 (PYPSGAGLHVGH) match the 'HIGH' region motif. The 'KMSKS' region signature appears at 600-604 (KMSKS). Lys603 serves as a coordination point for ATP.

Belongs to the class-I aminoacyl-tRNA synthetase family.

The protein localises to the cytoplasm. The catalysed reaction is tRNA(Leu) + L-leucine + ATP = L-leucyl-tRNA(Leu) + AMP + diphosphate. The sequence is that of Leucine--tRNA ligase from Chlamydia muridarum (strain MoPn / Nigg).